Reading from the N-terminus, the 107-residue chain is Phosphoribosyl-ATP pyrophosphatase (107 aa).

Belongs to the PRA-PH family.

Its subcellular location is the cytoplasm. The catalysed reaction is 1-(5-phospho-beta-D-ribosyl)-ATP + H2O = 1-(5-phospho-beta-D-ribosyl)-5'-AMP + diphosphate + H(+). It participates in amino-acid biosynthesis; L-histidine biosynthesis; L-histidine from 5-phospho-alpha-D-ribose 1-diphosphate: step 2/9. This is Phosphoribosyl-ATP pyrophosphatase from Brucella abortus (strain S19).